Consider the following 186-residue polypeptide: Potassium-transporting ATPase KdpC subunit (186 aa).

A helical membrane pass occupies residues 10-30 (LTIITMVLCGFLFPLAITLIG).

Belongs to the KdpC family. In terms of assembly, the system is composed of three essential subunits: KdpA, KdpB and KdpC.

Its subcellular location is the cell membrane. In terms of biological role, part of the high-affinity ATP-driven potassium transport (or Kdp) system, which catalyzes the hydrolysis of ATP coupled with the electrogenic transport of potassium into the cytoplasm. This subunit acts as a catalytic chaperone that increases the ATP-binding affinity of the ATP-hydrolyzing subunit KdpB by the formation of a transient KdpB/KdpC/ATP ternary complex. The sequence is that of Potassium-transporting ATPase KdpC subunit from Staphylococcus aureus (strain bovine RF122 / ET3-1).